Here is a 232-residue protein sequence, read N- to C-terminus: Phosphatidylserine decarboxylase proenzyme (232 aa).

The active-site Schiff-base intermediate with substrate; via pyruvic acid is serine 190. Serine 190 carries the post-translational modification Pyruvic acid (Ser); by autocatalysis.

Belongs to the phosphatidylserine decarboxylase family. PSD-A subfamily. As to quaternary structure, heterodimer of a large membrane-associated beta subunit and a small pyruvoyl-containing alpha subunit. Pyruvate is required as a cofactor. In terms of processing, is synthesized initially as an inactive proenzyme. Formation of the active enzyme involves a self-maturation process in which the active site pyruvoyl group is generated from an internal serine residue via an autocatalytic post-translational modification. Two non-identical subunits are generated from the proenzyme in this reaction, and the pyruvate is formed at the N-terminus of the alpha chain, which is derived from the carboxyl end of the proenzyme. The post-translation cleavage follows an unusual pathway, termed non-hydrolytic serinolysis, in which the side chain hydroxyl group of the serine supplies its oxygen atom to form the C-terminus of the beta chain, while the remainder of the serine residue undergoes an oxidative deamination to produce ammonia and the pyruvoyl prosthetic group on the alpha chain.

Its subcellular location is the cell membrane. It carries out the reaction a 1,2-diacyl-sn-glycero-3-phospho-L-serine + H(+) = a 1,2-diacyl-sn-glycero-3-phosphoethanolamine + CO2. The protein operates within phospholipid metabolism; phosphatidylethanolamine biosynthesis; phosphatidylethanolamine from CDP-diacylglycerol: step 2/2. Its function is as follows. Catalyzes the formation of phosphatidylethanolamine (PtdEtn) from phosphatidylserine (PtdSer). This Bartonella henselae (strain ATCC 49882 / DSM 28221 / CCUG 30454 / Houston 1) (Rochalimaea henselae) protein is Phosphatidylserine decarboxylase proenzyme.